The following is a 246-amino-acid chain: Bis(5'-nucleosyl)-tetraphosphatase PrpE [asymmetrical] (246 aa).

The protein belongs to the PrpE family. The cofactor is Ni(2+).

It carries out the reaction P(1),P(4)-bis(5'-guanosyl) tetraphosphate + H2O = GMP + GTP + 2 H(+). In terms of biological role, asymmetrically hydrolyzes Ap4p to yield AMP and ATP. This chain is Bis(5'-nucleosyl)-tetraphosphatase PrpE [asymmetrical], found in Bacillus cereus (strain AH820).